The following is a 173-amino-acid chain: Probable DNA-directed RNA polymerase subunit delta (173 aa).

Residues 14-81 (LSMIELGVKI…GSGMWGLKRW (68 aa)) form the HTH HARE-type domain. Residues 86 to 173 (QAEEEITEEP…EDENDDDNTR (88 aa)) form a disordered region. Over residues 109–173 (IDDVDDDLDV…EDENDDDNTR (65 aa)) the composition is skewed to acidic residues.

The protein belongs to the RpoE family. In terms of assembly, RNAP is composed of a core of 2 alpha, a beta and a beta' subunits. The core is associated with a delta subunit and one of several sigma factors.

Functionally, participates in both the initiation and recycling phases of transcription. In the presence of the delta subunit, RNAP displays an increased specificity of transcription, a decreased affinity for nucleic acids, and an increased efficiency of RNA synthesis because of enhanced recycling. In Oceanobacillus iheyensis (strain DSM 14371 / CIP 107618 / JCM 11309 / KCTC 3954 / HTE831), this protein is Probable DNA-directed RNA polymerase subunit delta.